Consider the following 1357-residue polypeptide: DNA-directed RNA polymerase subunit beta (1357 aa).

The protein belongs to the RNA polymerase beta chain family. In terms of assembly, the RNAP catalytic core consists of 2 alpha, 1 beta, 1 beta' and 1 omega subunit. When a sigma factor is associated with the core the holoenzyme is formed, which can initiate transcription.

The enzyme catalyses RNA(n) + a ribonucleoside 5'-triphosphate = RNA(n+1) + diphosphate. Functionally, DNA-dependent RNA polymerase catalyzes the transcription of DNA into RNA using the four ribonucleoside triphosphates as substrates. The protein is DNA-directed RNA polymerase subunit beta of Ectopseudomonas mendocina (strain ymp) (Pseudomonas mendocina).